The chain runs to 339 residues: Senescence-specific cysteine protease SAG39 (339 aa).

A signal peptide spans 1–23 (MAMAKALLFAILGCLCLCSAVLA). 3 cysteine pairs are disulfide-bonded: Cys-144/Cys-187, Cys-178/Cys-220, and Cys-276/Cys-328. Cys-147 is an active-site residue. Active-site residues include His-282 and Asn-303.

It belongs to the peptidase C1 family.

Its subcellular location is the vacuole. Functionally, cysteine protease that may have a developmental senescence specific cell death function during apoptosis, heavy metal detoxification, and hypersensitive response. In Oryza sativa subsp. indica (Rice), this protein is Senescence-specific cysteine protease SAG39.